A 408-amino-acid chain; its full sequence is MQDPNKLRPFFENVEFNREGSNMILNFGPQHPSAHGQLKLVLEVDGEKIIKARPGIGYMHRGVEKMAENMIYQEFVPVTDRVDYIAAGSNNYGFCATVEKLCGIDVPRRAQIIRTMLLELNRIASHLLFLGTHALDIGAMTVFLYTFREREYVLDLIEKYSGARLTHHNVKIGGMFVDLPDGWLDELLAFCEKFPRDIADYEALLDTNRIWLLRTQNVGVITKEQALSCGCSGVMLRASGYKWDIRKEEPYLIYDELDFDVPYAEAGDCYARYKCYVQEMRESVKILTQCVPLYKASEPKILADSPEFVSAGKEQLMSQNYSLMQHFVLITQGLKPPEGEIYLATESPKGELGFYIYSVGESSPYRLKIRCPSFWHCAIYEEIMPGQYIADVTAIIGSSNIILGEVDR.

This sequence belongs to the complex I 49 kDa subunit family. As to quaternary structure, NDH-1 is composed of 14 different subunits. Subunits NuoB, C, D, E, F, and G constitute the peripheral sector of the complex.

The protein localises to the cell inner membrane. The enzyme catalyses a quinone + NADH + 5 H(+)(in) = a quinol + NAD(+) + 4 H(+)(out). Functionally, NDH-1 shuttles electrons from NADH, via FMN and iron-sulfur (Fe-S) centers, to quinones in the respiratory chain. The immediate electron acceptor for the enzyme in this species is believed to be ubiquinone. Couples the redox reaction to proton translocation (for every two electrons transferred, four hydrogen ions are translocated across the cytoplasmic membrane), and thus conserves the redox energy in a proton gradient. This chain is NADH-quinone oxidoreductase subunit D, found in Campylobacter hominis (strain ATCC BAA-381 / DSM 21671 / CCUG 45161 / LMG 19568 / NCTC 13146 / CH001A).